We begin with the raw amino-acid sequence, 560 residues long: OTU domain-containing protein 5-A (560 aa).

Disordered stretches follow at residues 1 to 100 and 141 to 190; these read MTIL…MACV and GGGT…QSED. The span at 17-32 shows a compositional bias: basic and acidic residues; sequence DHPDDPDRRTGSDPHQ. A compositionally biased stretch (gly residues) spans 141–163; the sequence is GGGTGPGAAGGGGGGGGGGGVGG. The OTU domain maps to 211–334; it reads FVIKKMKEDG…NIHYNSVVNP (124 aa). Residues 216 to 222 are cys-loop; it reads MKEDGAC. Asp-219 is a catalytic residue. Catalysis depends on Cys-222, which acts as the Nucleophile. The variable-loop stretch occupies residues 271-281; sequence KRKNNCHGNHI. A his-loop region spans residues 322-327; sequence YHRNIH. Residue His-327 is part of the active site. The tract at residues 411-496 is disordered; sequence ARQPRKASAT…ACVGPDRPTS (86 aa). 2 stretches are compositionally biased toward low complexity: residues 417–430 and 437–448; these read ASAT…AASS and ARSPRQRSSAPS.

It belongs to the peptidase C85 family.

It catalyses the reaction Thiol-dependent hydrolysis of ester, thioester, amide, peptide and isopeptide bonds formed by the C-terminal Gly of ubiquitin (a 76-residue protein attached to proteins as an intracellular targeting signal).. In terms of biological role, deubiquitinating enzyme that may function as negative regulator of the innate immune system. Has peptidase activity towards 'Lys-48'- and 'Lys-63'-linked polyubiquitin chains. Can also cleave 'Lys-11'-linked ubiquitin chains (in vitro). The sequence is that of OTU domain-containing protein 5-A (otud5a) from Danio rerio (Zebrafish).